A 1065-amino-acid chain; its full sequence is WD repeat-containing protein on Y chromosome (1065 aa).

WD repeat units follow at residues 153–197 (EEVT…IRTA), 326–365 (RVPLGVSTFFVAESHNIVVTGGPDTFVRIWDVYIPTEPSA), 369–408 (GHNGGIVMVFVQPEENKVYSVDYQKIIKVWDLQEHTLLQT), 459–498 (THAAPVSVVLYNRLFRNIVTCGLDSYIIVWDPWSGRRKII), 511–550 (IIDIEITAATFDPLEQFLLTGARDGTLKIWNYNNAVVVRN), 598–638 (FHTD…RRYS), 745–784 (KTGDCVLTMCTDRKNRYIYTGTAFGYIKVWHIVNYCVPEA), and 828–867 (AHLKAINSIAFINLPKIVFSGSHDYSCRLWTQGGRYLGTL). The segment covering 915 to 925 (PAKRAEVKAPE) has biased composition (basic and acidic residues). Disordered stretches follow at residues 915-936 (PAKRAEVKAPEDRDEETAQTDD) and 1024-1065 (GSAL…QQSE). Acidic residues predominate over residues 926-936 (DRDEETAQTDD).

The polypeptide is WD repeat-containing protein on Y chromosome (Drosophila persimilis (Fruit fly)).